The sequence spans 134 residues: MSDSLERLYLAVLAARDLDPATSRTARLFQRGPSKMAKKLAEEAIEVVIDAVNGDTDAVVRESADLLYNLTVLWASAGVRPEDVWREMTRREDMLGIAEKLPKSAMKLPKVASPRVAARRPIVALEGRTARKRH.

This sequence belongs to the PRA-PH family.

The protein resides in the cytoplasm. The catalysed reaction is 1-(5-phospho-beta-D-ribosyl)-ATP + H2O = 1-(5-phospho-beta-D-ribosyl)-5'-AMP + diphosphate + H(+). It participates in amino-acid biosynthesis; L-histidine biosynthesis; L-histidine from 5-phospho-alpha-D-ribose 1-diphosphate: step 2/9. In Bradyrhizobium diazoefficiens (strain JCM 10833 / BCRC 13528 / IAM 13628 / NBRC 14792 / USDA 110), this protein is Phosphoribosyl-ATP pyrophosphatase 2 (hisE2).